Here is a 219-residue protein sequence, read N- to C-terminus: GTP cyclohydrolase-2 (219 aa).

R51–E55 is a binding site for GTP. Zn(2+)-binding residues include C56, C67, and C69. GTP is bound by residues Q72, E94 to R96, and T116. The Proton acceptor role is filled by D128. Residue R130 is the Nucleophile of the active site. The GTP site is built by T151 and K156.

Belongs to the GTP cyclohydrolase II family. It depends on Zn(2+) as a cofactor.

It catalyses the reaction GTP + 4 H2O = 2,5-diamino-6-hydroxy-4-(5-phosphoribosylamino)-pyrimidine + formate + 2 phosphate + 3 H(+). The protein operates within cofactor biosynthesis; riboflavin biosynthesis; 5-amino-6-(D-ribitylamino)uracil from GTP: step 1/4. Its function is as follows. Catalyzes the conversion of GTP to 2,5-diamino-6-ribosylamino-4(3H)-pyrimidinone 5'-phosphate (DARP), formate and pyrophosphate. This is GTP cyclohydrolase-2 from Pasteurella multocida (strain Pm70).